The chain runs to 418 residues: Tyrosine--tRNA ligase (418 aa).

Residue Y38 coordinates L-tyrosine. The short motif at 43–52 is the 'HIGH' region element; that stretch reads CTAKSLHVGS. Positions 175 and 179 each coordinate L-tyrosine. The short motif at 235-239 is the 'KMSKS' region element; it reads KMGKT. K238 provides a ligand contact to ATP. The region spanning 348–413 is the S4 RNA-binding domain; sequence LPIIKLLQIS…CGKKRHLKIM (66 aa).

This sequence belongs to the class-I aminoacyl-tRNA synthetase family. TyrS type 1 subfamily. In terms of assembly, homodimer.

It is found in the cytoplasm. The catalysed reaction is tRNA(Tyr) + L-tyrosine + ATP = L-tyrosyl-tRNA(Tyr) + AMP + diphosphate + H(+). In terms of biological role, catalyzes the attachment of tyrosine to tRNA(Tyr) in a two-step reaction: tyrosine is first activated by ATP to form Tyr-AMP and then transferred to the acceptor end of tRNA(Tyr). This is Tyrosine--tRNA ligase from Ehrlichia canis (strain Jake).